The primary structure comprises 962 residues: Protocadherin gamma-A4 (962 aa).

Positions 1-24 (MHFILDPEDPGAPQASTEGKPKHR) are disordered. An N-terminal signal peptide occupies residues 1–59 (MHFILDPEDPGAPQASTEGKPKHRRLRGGVVMAAPPARPDHTRLLQICLLLGVLVEIRA). Cadherin domains follow at residues 60-164 (EQIL…PPSF), 165-273 (GTEQ…APVF), 274-378 (TQPE…APEV), 379-483 (TVTS…PPTF), 484-598 (PHAS…YPTF), and 601-713 (DGST…KPSA). Topologically, residues 60 to 723 (EQILYSVFEE…DPDDSGLTLY (664 aa)) are extracellular. 2 N-linked (GlcNAc...) asparagine glycosylation sites follow: Asn450 and Asn576. A helical transmembrane segment spans residues 724 to 744 (LVVAVAAVSCVFLAFVTVLLA). Residues 745–962 (LKLRRWHKSR…KKKSGKKEKK (218 aa)) are Cytoplasmic-facing. Disordered stretches follow at residues 832 to 871 (KGDP…WPNN) and 932 to 962 (ATLT…KEKK). The span at 836–871 (NLQQAPPNTDWRFSQAQRPGTSGSQNGDDTGTWPNN) shows a compositional bias: polar residues. Residues 952-962 (NKKKSGKKEKK) are compositionally biased toward basic residues.

It is found in the cell membrane. Functionally, potential calcium-dependent cell-adhesion protein. May be involved in the establishment and maintenance of specific neuronal connections in the brain. The polypeptide is Protocadherin gamma-A4 (PCDHGA4) (Homo sapiens (Human)).